A 407-amino-acid polypeptide reads, in one-letter code: Chorismate synthase (407 aa).

NADP(+) is bound by residues R40 and R46. FMN is bound by residues 135 to 137 (RAS), 256 to 257 (QA), G300, 315 to 319 (KPIST), and R341.

The protein belongs to the chorismate synthase family. As to quaternary structure, homotetramer. The cofactor is FMNH2.

It carries out the reaction 5-O-(1-carboxyvinyl)-3-phosphoshikimate = chorismate + phosphate. Its pathway is metabolic intermediate biosynthesis; chorismate biosynthesis; chorismate from D-erythrose 4-phosphate and phosphoenolpyruvate: step 7/7. Its function is as follows. Catalyzes the anti-1,4-elimination of the C-3 phosphate and the C-6 proR hydrogen from 5-enolpyruvylshikimate-3-phosphate (EPSP) to yield chorismate, which is the branch point compound that serves as the starting substrate for the three terminal pathways of aromatic amino acid biosynthesis. This reaction introduces a second double bond into the aromatic ring system. This Mycobacterium leprae (strain Br4923) protein is Chorismate synthase.